Consider the following 530-residue polypeptide: C2H2-type transcription factor MSN2 (530 aa).

2 C2H2-type zinc fingers span residues 409–437 (FVCD…QEKP) and 438–465 (FECN…SGGA).

The protein localises to the nucleus. The protein resides in the cytoplasm. Its function is as follows. Transcription factor that acts as a key downstream transcription factor in the HOG1-MAPK pathway. Plays crucial roles in the regulation of dimorphism transition, aggravated pigmentation, conidiation, microsclerotia formation and subsequent virulence towards Spodoptera litura larvae. More specifically regulates the expression of genes involved in antioxidation, pigment biosynthesis and ion transport and storage. The sequence is that of C2H2-type transcription factor MSN2 from Metarhizium rileyi (strain RCEF 4871) (Nomuraea rileyi).